Consider the following 312-residue polypeptide: 6-hydroxy-3-succinoylpyridine 3-monooxygenase HspA (312 aa).

An NYN domain is found at 14 to 210 (IYIDGYNFYY…RSANTDLIKF (197 aa)).

The enzyme catalyses 4-(6-hydroxypyridin-3-yl)-4-oxobutanoate + 2 NADH + O2 + 2 H(+) = 2,5-dihydroxypyridine + succinate semialdehyde + 2 NAD(+) + H2O. Its pathway is alkaloid degradation; nicotine degradation. In terms of biological role, involved in the nicotine degradation. Catalyzes the cleavage of 6-hydroxy-3-succinoylpyridine (HSP) by incorporation of oxygen at the 3-position to produce to 2,5-dihydroxypyridine (DHP) and succinic semialdehyde. The chain is 6-hydroxy-3-succinoylpyridine 3-monooxygenase HspA from Pseudomonas putida (strain DSM 28022 / S16).